The primary structure comprises 353 residues: Guanine nucleotide-binding protein G(q) subunit alpha (353 aa).

Residues C3 and C4 are each lipidated (S-palmitoyl cysteine). Residues 32–353 form the G-alpha domain; the sequence is RELKLLLLGT…QLNLKEYNLV (322 aa). A G1 motif region spans residues 35-48; the sequence is KLLLLGTGESGKST. GTP contacts are provided by residues 40 to 47, 174 to 180, 199 to 203, 268 to 271, and A325; these read GTGESGKS, LRVRVPT, DVGGQ, and NKKD. Residues S47 and T180 each coordinate Mg(2+). Residues 172–180 form a G2 motif region; it reads DILRVRVPT. Residues 195-204 form a G3 motif region; sequence FRMVDVGGQR. Residues 264 to 271 are G4 motif; that stretch reads ILFLNKKD. The interval 323-328 is G5 motif; that stretch reads TCATDT.

The protein belongs to the G-alpha family. G(q) subfamily. In terms of assembly, g proteins are composed of 3 units; alpha, beta and gamma. The alpha chain contains the guanine nucleotide binding site.

Functionally, guanine nucleotide-binding proteins (G proteins) are involved as modulators or transducers in various transmembrane signaling systems. In Mizuhopecten yessoensis (Japanese scallop), this protein is Guanine nucleotide-binding protein G(q) subunit alpha (SCGQA).